The primary structure comprises 339 residues: DNA-directed RNA polymerase subunit alpha (339 aa).

An alpha N-terminal domain (alpha-NTD) region spans residues 1 to 235 (MTIQKNWQEL…DQLNVFVNFE (235 aa)). Positions 251–339 (FNPAFLKKVD…ELAKRFEDHY (89 aa)) are alpha C-terminal domain (alpha-CTD).

This sequence belongs to the RNA polymerase alpha chain family. Homodimer. The RNAP catalytic core consists of 2 alpha, 1 beta, 1 beta' and 1 omega subunit. When a sigma factor is associated with the core the holoenzyme is formed, which can initiate transcription.

It carries out the reaction RNA(n) + a ribonucleoside 5'-triphosphate = RNA(n+1) + diphosphate. Its function is as follows. DNA-dependent RNA polymerase catalyzes the transcription of DNA into RNA using the four ribonucleoside triphosphates as substrates. This Afipia carboxidovorans (strain ATCC 49405 / DSM 1227 / KCTC 32145 / OM5) (Oligotropha carboxidovorans) protein is DNA-directed RNA polymerase subunit alpha.